Consider the following 406-residue polypeptide: Elongation factor Ts, mitochondrial (406 aa).

The tract at residues 387 to 406 is disordered; sequence ARPSDETSFADQVKEAAGLA.

It belongs to the EF-Ts family.

The protein resides in the mitochondrion. Associates with the EF-Tu.GDP complex and induces the exchange of GDP to GTP. It remains bound to the aminoacyl-tRNA.EF-Tu.GTP complex up to the GTP hydrolysis stage on the ribosome. This Malassezia globosa (strain ATCC MYA-4612 / CBS 7966) (Dandruff-associated fungus) protein is Elongation factor Ts, mitochondrial.